We begin with the raw amino-acid sequence, 118 residues long: MNKKDARLRRARQTRAKIAEMKVNRLTVFRTNSHIYAQVFSECGTKVLASASTAEVEVRKELDGKGATAAAATVVGKRIAEKAKAAGVETVAFDRAGFRFHGRVKALADAAREAGLKF.

Belongs to the universal ribosomal protein uL18 family. In terms of assembly, part of the 50S ribosomal subunit; part of the 5S rRNA/L5/L18/L25 subcomplex. Contacts the 5S and 23S rRNAs.

This is one of the proteins that bind and probably mediate the attachment of the 5S RNA into the large ribosomal subunit, where it forms part of the central protuberance. This Cupriavidus pinatubonensis (strain JMP 134 / LMG 1197) (Cupriavidus necator (strain JMP 134)) protein is Large ribosomal subunit protein uL18.